A 139-amino-acid chain; its full sequence is Histone H2B (139 aa).

The segment covering 1-10 (MAPKVAEKKP) has biased composition (basic and acidic residues). The tract at residues 1 to 47 (MAPKVAEKKPSLAGKAPAGKAPAEKKEAGKKTTTATGEKKKRTKARK) is disordered. N6-acetyllysine; alternate occurs at positions 8 and 9. Glycyl lysine isopeptide (Lys-Gly) (interchain with G-Cter in SUMO); alternate cross-links involve residues Lys8 and Lys9. N6-acetyllysine is present on Lys15. Position 25 is an N6-acetyllysine; alternate (Lys25). Lys25 participates in a covalent cross-link: Glycyl lysine isopeptide (Lys-Gly) (interchain with G-Cter in SUMO); alternate. Lys26 is covalently cross-linked (Glycyl lysine isopeptide (Lys-Gly) (interchain with G-Cter in SUMO)). A Glycyl lysine isopeptide (Lys-Gly) (interchain with G-Cter in ubiquitin) cross-link involves residue Lys133.

This sequence belongs to the histone H2B family. In terms of assembly, the nucleosome is a histone octamer containing two molecules each of H2A, H2B, H3 and H4 assembled in one H3-H4 heterotetramer and two H2A-H2B heterodimers. The octamer wraps approximately 147 bp of DNA. Monoubiquitinated by the UBC2-BRE1 complex to form H2BK123ub1. H2BK123ub1 gives a specific tag for epigenetic transcriptional activation and is also prerequisite for H3K4me and H3K79me formation. H2BK123ub1 also modulates the formation of double-strand breaks during meiosis and is a prerequisite for DNA-damage checkpoint activation. Post-translationally, acetylated by GCN5 to form H2BK11ac and H2BK16ac. H2BK16ac can also be formed by ESA1. Acetylation of N-terminal lysines and particularly formation of H2BK11acK16ac has a positive effect on transcription. In terms of processing, sumoylation to form H2BK6su or H2BK7su, and probably also H2BK16su or H2BK17su, occurs preferentially near the telomeres and represses gene transcription.

It is found in the nucleus. It localises to the chromosome. In terms of biological role, core component of nucleosome. Nucleosomes wrap and compact DNA into chromatin, limiting DNA accessibility to the cellular machineries which require DNA as a template. Histones thereby play a central role in transcription regulation, DNA repair, DNA replication and chromosomal stability. DNA accessibility is regulated via a complex set of post-translational modifications of histones, also called histone code, and nucleosome remodeling. This chain is Histone H2B (HTB1), found in Yarrowia lipolytica (strain CLIB 122 / E 150) (Yeast).